Here is a 341-residue protein sequence, read N- to C-terminus: Ferrochelatase (341 aa).

Fe cation contacts are provided by histidine 210 and glutamate 291.

It belongs to the ferrochelatase family.

Its subcellular location is the cytoplasm. It carries out the reaction heme b + 2 H(+) = protoporphyrin IX + Fe(2+). Its pathway is porphyrin-containing compound metabolism; protoheme biosynthesis; protoheme from protoporphyrin-IX: step 1/1. In terms of biological role, catalyzes the ferrous insertion into protoporphyrin IX. The chain is Ferrochelatase from Alcanivorax borkumensis (strain ATCC 700651 / DSM 11573 / NCIMB 13689 / SK2).